The following is a 590-amino-acid chain: Aspartate--tRNA ligase (590 aa).

L-aspartate is bound at residue E174. Positions 198-201 are aspartate; that stretch reads QLMK. An L-aspartate-binding site is contributed by R220. ATP contacts are provided by residues 220–222 and Q229; that span reads RDE. Residue H443 coordinates L-aspartate. Position 484 (E484) interacts with ATP. R491 serves as a coordination point for L-aspartate. 536–539 is a binding site for ATP; sequence GLDR.

It belongs to the class-II aminoacyl-tRNA synthetase family. Type 1 subfamily. Homodimer.

It is found in the cytoplasm. It carries out the reaction tRNA(Asp) + L-aspartate + ATP = L-aspartyl-tRNA(Asp) + AMP + diphosphate. Its function is as follows. Catalyzes the attachment of L-aspartate to tRNA(Asp) in a two-step reaction: L-aspartate is first activated by ATP to form Asp-AMP and then transferred to the acceptor end of tRNA(Asp). In Lactococcus lactis subsp. cremoris (strain SK11), this protein is Aspartate--tRNA ligase.